The chain runs to 79 residues: Acyl carrier protein (79 aa).

Residues 2–79 (ASKEEILAGL…QDAVDFIXGA (78 aa)) enclose the Carrier domain. Ser-40 carries the post-translational modification O-(pantetheine 4'-phosphoryl)serine.

Belongs to the acyl carrier protein (ACP) family. 4'-phosphopantetheine is transferred from CoA to a specific serine of apo-ACP by AcpS. This modification is essential for activity because fatty acids are bound in thioester linkage to the sulfhydryl of the prosthetic group.

It localises to the cytoplasm. The protein operates within lipid metabolism; fatty acid biosynthesis. Carrier of the growing fatty acid chain in fatty acid biosynthesis. The chain is Acyl carrier protein from Myxococcus xanthus.